Reading from the N-terminus, the 225-residue chain is 2-C-methyl-D-erythritol 4-phosphate cytidylyltransferase (225 aa).

Belongs to the IspD/TarI cytidylyltransferase family. IspD subfamily.

The enzyme catalyses 2-C-methyl-D-erythritol 4-phosphate + CTP + H(+) = 4-CDP-2-C-methyl-D-erythritol + diphosphate. The protein operates within isoprenoid biosynthesis; isopentenyl diphosphate biosynthesis via DXP pathway; isopentenyl diphosphate from 1-deoxy-D-xylulose 5-phosphate: step 2/6. Functionally, catalyzes the formation of 4-diphosphocytidyl-2-C-methyl-D-erythritol from CTP and 2-C-methyl-D-erythritol 4-phosphate (MEP). The protein is 2-C-methyl-D-erythritol 4-phosphate cytidylyltransferase of Prochlorococcus marinus (strain NATL2A).